The sequence spans 136 residues: Large-conductance mechanosensitive channel (136 aa).

The Cytoplasmic portion of the chain corresponds to 1–16; it reads MGLLSEFKAFAVKGNV. A helical transmembrane segment spans residues 17 to 45; it reads VDMAVGIIIGAAFGKIVSSFVGDVIMPPI. Over 46 to 73 the chain is Extracellular; sequence GLLIGGVDFSDLAITLKAEGDVPAVVLA. Residues 74–93 traverse the membrane as a helical segment; that stretch reads YRKFIQTVLNFVIVAFAIFM. Over 94–136 the chain is Cytoplasmic; sequence GVKAINRLKREEAVAPSEPPVPSAEETLLTEIRDLLKAQQNKS.

It belongs to the MscL family. In terms of assembly, homopentamer.

It is found in the cell inner membrane. Channel that opens in response to stretch forces in the membrane lipid bilayer. Forms a nonselective ion channel with a conductance of about 4 nanosiemens. May participate in the regulation of osmotic pressure changes within the cell. This is Large-conductance mechanosensitive channel from Pseudomonas fluorescens.